The primary structure comprises 567 residues: Pyrethroid hydrolase Ces2e (567 aa).

Positions 1 to 36 are cleaved as a signal peptide; the sequence is MAQTRAWKSIMPLESLPGWLNAVVWGLLLLFCQVQG. The residue at position 37 (Gln-37) is a Pyrrolidone carboxylic acid. Cys-105 and Cys-132 form a disulfide bridge. Ser-237 (acyl-ester intermediate) is an active-site residue. A disulfide bridge links Cys-289 with Cys-300. Active-site charge relay system residues include Glu-354 and His-465.

The protein belongs to the type-B carboxylesterase/lipase family. As to expression, expressed in liver.

The protein localises to the microsome. The catalysed reaction is all-trans-retinyl hexadecanoate + H2O = all-trans-retinol + hexadecanoate + H(+). It carries out the reaction (-)-trans-permethrin + H2O = (3-phenoxyphenyl)methanol + (1S,3R)-3-(2,2-dichlorovinyl)-2,2-dimethylcyclopropanecarboxylate + H(+). In terms of biological role, carboxylesterase that catalyzes the hydrolysis of pyrethroids pesticides. Hydrolyzes trans-permethrin at a rate about 22-fold higher than cis-permethrin. Also hydrolyzes trans-cypermethrin. Hydrolyzes retinyl esters. The sequence is that of Pyrethroid hydrolase Ces2e from Rattus norvegicus (Rat).